The sequence spans 267 residues: 2-keto-3-deoxy-L-rhamnonate aldolase (267 aa).

The active-site Proton acceptor is His49. Residue Gln151 participates in substrate binding. Glu153 is a Mg(2+) binding site. Substrate contacts are provided by Ala178 and Asp179. Position 179 (Asp179) interacts with Mg(2+).

The protein belongs to the HpcH/HpaI aldolase family. KDR aldolase subfamily. In terms of assembly, homohexamer. Mg(2+) is required as a cofactor.

It carries out the reaction 2-dehydro-3-deoxy-L-rhamnonate = (S)-lactaldehyde + pyruvate. Catalyzes the reversible retro-aldol cleavage of 2-keto-3-deoxy-L-rhamnonate (KDR) to pyruvate and lactaldehyde. This chain is 2-keto-3-deoxy-L-rhamnonate aldolase, found in Shigella sonnei (strain Ss046).